The primary structure comprises 363 residues: Photosystem II protein D1 1 (363 aa).

Helical transmembrane passes span 32–49 (YVGWFGLLMIPSLFVSAI), 121–136 (HFLIAIWTYLGRQWEL), and 145–159 (WIAMAFSAPVAAATA). H121 is a chlorophyll a binding site. Y129 contacts pheophytin a. [CaMn4O5] cluster is bound by residues E173 and E192. A helical membrane pass occupies residues 200-221 (FHMLGVVGVFGGAFLSAMHGSL). Chlorophyll a is bound at residue H201. A quinone is bound by residues H218 and 268–269 (AF). H218 provides a ligand contact to Fe cation. H276 lines the Fe cation pocket. Residues 278-292 (LLAVLPTIGIWFAAL) traverse the membrane as a helical segment. Positions 336 and 348 each coordinate [CaMn4O5] cluster. A propeptide spanning residues 349 to 363 (STESKEIPTIPIMTS) is cleaved from the precursor.

It belongs to the reaction center PufL/M/PsbA/D family. PSII is composed of 1 copy each of membrane proteins PsbA, PsbB, PsbC, PsbD, PsbE, PsbF, PsbH, PsbI, PsbJ, PsbK, PsbL, PsbM, PsbT, PsbX, PsbY, PsbZ, Psb30/Ycf12, peripheral proteins PsbO, CyanoQ (PsbQ), PsbU, PsbV and a large number of cofactors. It forms dimeric complexes. It depends on The D1/D2 heterodimer binds P680, chlorophylls that are the primary electron donor of PSII, and subsequent electron acceptors. It shares a non-heme iron and each subunit binds pheophytin, quinone, additional chlorophylls, carotenoids and lipids. D1 provides most of the ligands for the Mn4-Ca-O5 cluster of the oxygen-evolving complex (OEC). There is also a Cl(-1) ion associated with D1 and D2, which is required for oxygen evolution. The PSII complex binds additional chlorophylls, carotenoids and specific lipids. as a cofactor. In terms of processing, tyr-164 forms a radical intermediate that is referred to as redox-active TyrZ, YZ or Y-Z. Post-translationally, C-terminally processed by CtpA; processing is essential to allow assembly of the oxygen-evolving complex and thus photosynthetic growth.

It is found in the cellular thylakoid membrane. It catalyses the reaction 2 a plastoquinone + 4 hnu + 2 H2O = 2 a plastoquinol + O2. In terms of biological role, photosystem II (PSII) is a light-driven water:plastoquinone oxidoreductase that uses light energy to abstract electrons from H(2)O, generating O(2) and a proton gradient subsequently used for ATP formation. It consists of a core antenna complex that captures photons, and an electron transfer chain that converts photonic excitation into a charge separation. The D1/D2 (PsbA/PsbD) reaction center heterodimer binds P680, the primary electron donor of PSII as well as several subsequent electron acceptors. This chain is Photosystem II protein D1 1, found in Acaryochloris marina (strain MBIC 11017).